The chain runs to 448 residues: Exodeoxyribonuclease 7 large subunit (448 aa).

It belongs to the XseA family. Heterooligomer composed of large and small subunits.

The protein localises to the cytoplasm. It catalyses the reaction Exonucleolytic cleavage in either 5'- to 3'- or 3'- to 5'-direction to yield nucleoside 5'-phosphates.. Its function is as follows. Bidirectionally degrades single-stranded DNA into large acid-insoluble oligonucleotides, which are then degraded further into small acid-soluble oligonucleotides. The sequence is that of Exodeoxyribonuclease 7 large subunit from Shewanella baltica (strain OS195).